The chain runs to 593 residues: Salivary alpha-glucosidase (593 aa).

An N-terminal signal peptide occupies residues 1-19 (MPPLGVLLLLVALGHSTQG). Positions 49, 51, 53, 55, 57, and 130 each coordinate Ca(2+). N-linked (GlcNAc...) asparagine glycans are attached at residues N130 and N163. Ca(2+)-binding residues include D201, Y235, L236, and E238. N-linked (GlcNAc...) asparagine glycans are attached at residues N295, N310, N338, N414, N445, and N453. Position 338 (N338) interacts with N-acetyl-beta-D-glucosamine.

The protein belongs to the glycosyl hydrolase 13 family. Saliva (at protein level). Proximal lateral lobes of the salivary gland (at protein level).

The protein resides in the secreted. It catalyses the reaction Hydrolysis of terminal, non-reducing (1-&gt;4)-linked alpha-D-glucose residues with release of alpha-D-glucose.. In terms of biological role, functions as a glucosidase that shows high activity toward sucrose, a major component of nectar. Assists the mosquito in its sugar-feeding capabilities. The protein is Salivary alpha-glucosidase of Anopheles gambiae (African malaria mosquito).